The primary structure comprises 226 residues: Neuron-specific vesicular protein calcyon (226 aa).

The tract at residues methionine 1–glycine 21 is disordered. The Extracellular segment spans residues methionine 1–arginine 88. The chain crosses the membrane as a helical span at residues methionine 89 to tyrosine 109. Residues aspartate 110–lysine 226 lie on the Cytoplasmic side of the membrane. Residues histidine 177–lysine 226 are disordered. Residues alanine 183 to alanine 196 show a composition bias toward low complexity. Basic and acidic residues predominate over residues leucine 206–lysine 216.

It belongs to the NSG family. In terms of assembly, interacts with CLTA. Most abundant in brain. Also expressed in testis and ovary and, at much lower levels, in kidney and heart.

The protein localises to the cytoplasmic vesicle membrane. The protein resides in the cell membrane. In terms of biological role, interacts with clathrin light chain A and stimulates clathrin self-assembly and clathrin-mediated endocytosis. This is Neuron-specific vesicular protein calcyon (Caly) from Mus musculus (Mouse).